Here is a 409-residue protein sequence, read N- to C-terminus: Lissencephaly-1 homolog (409 aa).

The LisH domain occupies 7 to 39; the sequence is RRERSNQAIADYLGSNGYTDALEAFRKEADMPN. Residues 54 to 81 are a coiled coil; the sequence is TSVIRLQKKVMELEAKLSEAEKEAIEGA. WD repeat units lie at residues 104 to 145, 146 to 185, 189 to 228, 231 to 270, 273 to 332, 335 to 374, and 377 to 409; these read GHRA…RTLK, GHTD…ECVK, GHDH…CVKT, GHRE…CKAE, EHEN…CLFT, GHDN…CMKT, and AHSH…WECR.

The protein belongs to the WD repeat LIS1/nudF family.

The protein resides in the cytoplasm. It is found in the cytoskeleton. It localises to the microtubule organizing center. Its subcellular location is the centrosome. Functionally, positively regulates the activity of the minus-end directed microtubule motor protein dynein. May enhance dynein-mediated microtubule sliding by targeting dynein to the microtubule plus end. Required for several dynein- and microtubule-dependent processes. The chain is Lissencephaly-1 homolog from Aedes aegypti (Yellowfever mosquito).